The following is a 2664-amino-acid chain: Inositol 1,4,5-trisphosphate-gated calcium channel ITPR3 (2664 aa).

Residues 1–2227 are Cytoplasmic-facing; that stretch reads MSEMSSFLHI…YVEGASTGVL (2227 aa). 5 consecutive MIR domains span residues 113-173, 174-224, 232-288, 295-372, and 378-434; these read GDVV…LRSN, GDNV…INLF, EEVL…VEVV, GGAG…LDPT, and DSFV…IVSV. 1D-myo-inositol 1,4,5-trisphosphate-binding residues include arginine 266, threonine 268, leucine 269, and arginine 270. Positions 320 to 344 are disordered; the sequence is NPSYKGDASDPKAAGTGAQGRTGRR. 6 residues coordinate 1D-myo-inositol 1,4,5-trisphosphate: arginine 503, lysine 507, arginine 510, tyrosine 567, arginine 568, and lysine 569. Ca(2+) is bound at residue arginine 743. A phosphoserine mark is found at serine 909 and serine 927. Residues glutamate 1115 and glutamate 1118 each contribute to the Ca(2+) site. Disordered stretches follow at residues 1124 to 1158 and 1790 to 1850; these read KGASKGEEGEAGPAKDKKERPTDEEGFLHPPGEKS and QQET…VGER. The segment covering 1792–1805 has biased composition (polar residues); the sequence is ETKSTVAVNMSDLG. Serine 1806, serine 1825, and serine 1827 each carry phosphoserine. Residues glutamate 1875 and glutamate 1939 each coordinate Ca(2+). Residues alanine 1989, glutamate 2142, and lysine 2145 each contribute to the ATP site. Residues 2228–2248 traverse the membrane as a helical segment; it reads GSPLISLLFWILICFSIAALF. The Extracellular segment spans residues 2249 to 2256; the sequence is TKRYSVRP. The helical transmembrane segment at 2257-2277 threads the bilayer; the sequence is LIVALILRSIYYLGIGPTLNI. Topologically, residues 2278 to 2286 are cytoplasmic; the sequence is LGALNLTNK. The helical transmembrane segment at 2287 to 2304 threads the bilayer; it reads IVFVVSFVGNRGTFIRGY. At 2305–2318 the chain is on the extracellular side; that stretch reads KAMVMDMEFLYHVG. The helical transmembrane segment at 2319-2339 threads the bilayer; sequence YILTSVLGLFAHELFYSILLF. The Cytoplasmic portion of the chain corresponds to 2340–2361; it reads DLIYREETLFNVIKSVTRNGRS. A helical membrane pass occupies residues 2362 to 2382; that stretch reads ILLTALLALILVYLFSIVGFL. The Extracellular segment spans residues 2383 to 2489; that stretch reads FLKDDFILEV…ESLFPARVVY (107 aa). Cysteines 2448 and 2454 form a disulfide. Residues 2490–2510 form a helical membrane-spanning segment; sequence DLLFFFIVIIIVLNLIFGVII. Residues 2511-2664 are Cytoplasmic-facing; that stretch reads DTFADLRSEK…FVDVQNCMSR (154 aa). ATP contacts are provided by cysteine 2531 and phenylalanine 2532. Cysteine 2531 is a Zn(2+) binding site. Zn(2+)-binding residues include cysteine 2534 and histidine 2551. ATP-binding residues include lysine 2553, histidine 2556, asparagine 2557, and methionine 2558. Histidine 2556 contacts Zn(2+). Threonine 2574 serves as a coordination point for Ca(2+). Phosphoserine occurs at positions 2602 and 2663.

Belongs to the InsP3 receptor family. As to quaternary structure, homotetramer. Homodimer. Interacts with TRPC1, TRPC3 and TRPC4. Interacts with TRPV4. Interacts with SIGMAR1. Interacts with PML and AKT1. Interacts with IRAG2 (via coiled-coil domain). Interacts with CABP1. Interacts with TMBIM4/LFG4. Interacts with CEMIP. Interacts with TESPA1. Interacts with TMEM203. Interacts with BOK; regulates ITPR3 expression. Interacts with BCL2L10. Interacts with CHGA and CHGB. Phosphorylated by AKT1 on serine and/or threonine residues.

The protein resides in the endoplasmic reticulum membrane. Its subcellular location is the cytoplasmic vesicle. It is found in the secretory vesicle membrane. It catalyses the reaction Ca(2+)(in) = Ca(2+)(out). Inositol 1,4,5-trisphosphate-gated calcium channel is regulated by cytosolic calcium in a biphasic manner. At low concentrations, cytosolic calcium binds at a high-affinity juxtamembrane domain (JD) calcium binding site, allowing ITPR3 to activate by escaping a low-energy resting state through an ensemble of preactivated states. At high cytosolic calcium concentrations, ITPR3 preferentially enters an inhibited state stabilized by calcium binding at a second, low-affinity cytoplasmic domain (CD) calcium binding site. Functionally, inositol 1,4,5-trisphosphate-gated calcium channel that, upon 1D-myo-inositol 1,4,5-trisphosphate binding, transports calcium from the endoplasmic reticulum lumen to cytoplasm, thus releasing the intracellular calcium and therefore participates in cellular calcium ion homeostasis. 1D-myo-inositol 1,4,5-trisphosphate binds to the ligand-free channel without altering its global conformation, yielding the low-energy resting state, then progresses through resting-to preactivated transitions to the higher energy preactivated state, which increases affinity for calcium, promoting binding of the low basal cytosolic calcium at the juxtamembrane domain (JD) site, favoring the transition through the ensemble of high-energy intermediate states along the trajectory to the fully-open activated state. Upon opening, releases calcium in the cytosol where it can bind to the low-affinity cytoplasmic domain (CD) site and stabilizes the inhibited state to terminate calcium release. This Bos taurus (Bovine) protein is Inositol 1,4,5-trisphosphate-gated calcium channel ITPR3.